Consider the following 262-residue polypeptide: MSVVSMKQLLEAGVHFGHQTRRWNPKMEEYIFTERNGIYIIDLQKTVKLIDTAYNYMKDVAANDGVALFVGTKKQAQDAIEEEATRAGQYYVNHRWLGGTLTNWKTIQSRIARLKELKKMSEDGTFDVLPKKEVAVLTKQREKLERFLGGIEDMPRIPDVMFIVDPHKEQIAVKEAQKLHIPIVAMVDTNTDPDDIDYVIPSNDDAIRAVRLITSKMADAFVEGKQGQDDAQQETADDNAANETVSEDSLKNLKNSVEGKED.

The interval 224 to 262 (GKQGQDDAQQETADDNAANETVSEDSLKNLKNSVEGKED) is disordered.

Belongs to the universal ribosomal protein uS2 family.

The protein is Small ribosomal subunit protein uS2 of Limosilactobacillus reuteri (strain DSM 20016) (Lactobacillus reuteri).